A 199-amino-acid chain; its full sequence is Nuclear transcription factor Y subunit C-2 (199 aa).

Belongs to the NFYC/HAP5 subunit family. As to quaternary structure, heterotrimeric transcription factor composed of three components, NF-YA, NF-YB and NF-YC. NF-YB and NF-YC must interact and dimerize for NF-YA association and DNA binding. Interacts with HTT1 in both cytoplasm and nucleus. As to expression, ubiquitous.

The protein resides in the nucleus. It is found in the cytoplasm. Functionally, stimulates the transcription of various genes by recognizing and binding to a CCAAT motif in promoters. The sequence is that of Nuclear transcription factor Y subunit C-2 (NFYC2) from Arabidopsis thaliana (Mouse-ear cress).